Consider the following 315-residue polypeptide: Malate dehydrogenase (315 aa).

An NAD(+)-binding site is contributed by 9–15 (GGSGNVG). Residues Arg84 and Arg90 each contribute to the substrate site. NAD(+) is bound by residues Asn97 and 120 to 122 (VSN). Substrate-binding residues include Asn122 and Arg153. The active-site Proton acceptor is the His177.

The protein belongs to the LDH/MDH superfamily.

The enzyme catalyses (S)-malate + NAD(+) = oxaloacetate + NADH + H(+). Catalyzes the reversible oxidation of malate to oxaloacetate. The polypeptide is Malate dehydrogenase (Helicobacter hepaticus (strain ATCC 51449 / 3B1)).